We begin with the raw amino-acid sequence, 225 residues long: Histone H1 (225 aa).

A disordered region spans residues 1–20 (MGPKATSGTRGRGKKVGTKT). The region spanning 23–94 (PLPKYKDLIV…GPAGSIKLLK (72 aa)) is the H15 domain. The disordered stretch occupies residues 95–147 (KAAQPKPEEAKRAAKPAKRVVKAAKPAKAKPAKAAKAAKPAKPVKAAKAASAV). The span at 107 to 127 (AAKPAKRVVKAAKPAKAKPAK) shows a compositional bias: basic residues. Low complexity predominate over residues 128–147 (AAKAAKPAKPVKAAKAASAV).

The protein belongs to the histone H1/H5 family.

The protein localises to the nucleus. Its subcellular location is the chromosome. Could act as an H1-type linker histone. The chain is Histone H1 (HHOA) from Eremothecium gossypii (strain ATCC 10895 / CBS 109.51 / FGSC 9923 / NRRL Y-1056) (Yeast).